Consider the following 269-residue polypeptide: 4-hydroxy-tetrahydrodipicolinate reductase (269 aa).

Residues glycine 8–methionine 13, glutamate 34, glycine 98–threonine 100, and alanine 122–methionine 125 contribute to the NAD(+) site. Catalysis depends on histidine 155, which acts as the Proton donor/acceptor. Histidine 156 lines the (S)-2,3,4,5-tetrahydrodipicolinate pocket. Lysine 159 acts as the Proton donor in catalysis. Residue glycine 165–threonine 166 coordinates (S)-2,3,4,5-tetrahydrodipicolinate.

Belongs to the DapB family.

The protein resides in the cytoplasm. It catalyses the reaction (S)-2,3,4,5-tetrahydrodipicolinate + NAD(+) + H2O = (2S,4S)-4-hydroxy-2,3,4,5-tetrahydrodipicolinate + NADH + H(+). The catalysed reaction is (S)-2,3,4,5-tetrahydrodipicolinate + NADP(+) + H2O = (2S,4S)-4-hydroxy-2,3,4,5-tetrahydrodipicolinate + NADPH + H(+). It functions in the pathway amino-acid biosynthesis; L-lysine biosynthesis via DAP pathway; (S)-tetrahydrodipicolinate from L-aspartate: step 4/4. Functionally, catalyzes the conversion of 4-hydroxy-tetrahydrodipicolinate (HTPA) to tetrahydrodipicolinate. The protein is 4-hydroxy-tetrahydrodipicolinate reductase of Desulfotalea psychrophila (strain LSv54 / DSM 12343).